A 159-amino-acid polypeptide reads, in one-letter code: Acetolactate synthase small subunit (159 aa).

One can recognise an ACT domain in the interval 5-79 (ILSILLENES…DVLKVTEIED (75 aa)).

It belongs to the acetolactate synthase small subunit family. Dimer of large and small chains.

The enzyme catalyses 2 pyruvate + H(+) = (2S)-2-acetolactate + CO2. It participates in amino-acid biosynthesis; L-isoleucine biosynthesis; L-isoleucine from 2-oxobutanoate: step 1/4. Its pathway is amino-acid biosynthesis; L-valine biosynthesis; L-valine from pyruvate: step 1/4. The sequence is that of Acetolactate synthase small subunit (ilvH) from Buchnera aphidicola subsp. Baizongia pistaciae (strain Bp).